Here is a 545-residue protein sequence, read N- to C-terminus: ATP synthase subunit alpha (545 aa).

173–180 (GDRQTGKT) is a binding site for ATP.

Belongs to the ATPase alpha/beta chains family. F-type ATPases have 2 components, CF(1) - the catalytic core - and CF(0) - the membrane proton channel. CF(1) has five subunits: alpha(3), beta(3), gamma(1), delta(1), epsilon(1). CF(0) has three main subunits: a(1), b(2) and c(9-12). The alpha and beta chains form an alternating ring which encloses part of the gamma chain. CF(1) is attached to CF(0) by a central stalk formed by the gamma and epsilon chains, while a peripheral stalk is formed by the delta and b chains.

Its subcellular location is the cell membrane. It catalyses the reaction ATP + H2O + 4 H(+)(in) = ADP + phosphate + 5 H(+)(out). In terms of biological role, produces ATP from ADP in the presence of a proton gradient across the membrane. The alpha chain is a regulatory subunit. The polypeptide is ATP synthase subunit alpha (Paenarthrobacter aurescens (strain TC1)).